The following is an 833-amino-acid chain: Protein translocase subunit SecA (833 aa).

Residues glutamine 87, 105-109, and aspartate 494 contribute to the ATP site; that span reads GEGKT. Residues 789-816 form a disordered region; that stretch reads PAAVAYSGGEAEAGPAQPHREDPKVGRN. Basic and acidic residues predominate over residues 806–815; the sequence is PHREDPKVGR. Residues cysteine 819, cysteine 821, cysteine 830, and cysteine 831 each contribute to the Zn(2+) site.

This sequence belongs to the SecA family. Monomer and homodimer. Part of the essential Sec protein translocation apparatus which comprises SecA, SecYEG and auxiliary proteins SecDF-YajC and YidC. Zn(2+) is required as a cofactor.

The protein resides in the cell inner membrane. The protein localises to the cytoplasm. It catalyses the reaction ATP + H2O + cellular proteinSide 1 = ADP + phosphate + cellular proteinSide 2.. Its function is as follows. Part of the Sec protein translocase complex. Interacts with the SecYEG preprotein conducting channel. Has a central role in coupling the hydrolysis of ATP to the transfer of proteins into and across the cell membrane, serving as an ATP-driven molecular motor driving the stepwise translocation of polypeptide chains across the membrane. This chain is Protein translocase subunit SecA, found in Nitratidesulfovibrio vulgaris (strain ATCC 29579 / DSM 644 / CCUG 34227 / NCIMB 8303 / VKM B-1760 / Hildenborough) (Desulfovibrio vulgaris).